We begin with the raw amino-acid sequence, 149 residues long: Small ribosomal subunit protein uS11z (149 aa).

A disordered region spans residues 130–149 (VTPVPTDSTRRKGGRRGRRL). The segment covering 140 to 149 (RKGGRRGRRL) has biased composition (basic residues).

It belongs to the universal ribosomal protein uS11 family.

This chain is Small ribosomal subunit protein uS11z, found in Zea mays (Maize).